An 86-amino-acid polypeptide reads, in one-letter code: uncharacterized protein (86 aa).

The protein resides in the mitochondrion. This is an uncharacterized protein from Marchantia polymorpha (Common liverwort).